The following is a 513-amino-acid chain: ATP synthase subunit alpha (513 aa).

169-176 (GDRQTGKT) lines the ATP pocket.

Belongs to the ATPase alpha/beta chains family. As to quaternary structure, F-type ATPases have 2 components, CF(1) - the catalytic core - and CF(0) - the membrane proton channel. CF(1) has five subunits: alpha(3), beta(3), gamma(1), delta(1), epsilon(1). CF(0) has three main subunits: a(1), b(2) and c(9-12). The alpha and beta chains form an alternating ring which encloses part of the gamma chain. CF(1) is attached to CF(0) by a central stalk formed by the gamma and epsilon chains, while a peripheral stalk is formed by the delta and b chains.

The protein localises to the cell inner membrane. It carries out the reaction ATP + H2O + 4 H(+)(in) = ADP + phosphate + 5 H(+)(out). Produces ATP from ADP in the presence of a proton gradient across the membrane. The alpha chain is a regulatory subunit. The polypeptide is ATP synthase subunit alpha (Haemophilus ducreyi (strain 35000HP / ATCC 700724)).